The following is a 248-amino-acid chain: Inhibitor of growth protein 4 (248 aa).

Residues 25–118 (FQLMRDLDQR…ADLKEKQIES (94 aa)) are a coiled coil. N6-acetyllysine occurs at positions 112, 127, and 129. The tract at residues 115 to 160 (QIESSDYDSSSSKGKKSRTQKEKKAARARSKGKNSDEEAPKAAQKK) is disordered. The Bipartite nuclear localization signal signature appears at 127–147 (KGKKSRTQKEKKAARARSKGK). Arg-132 carries the citrulline modification. Residues Lys-145, Lys-147, and Lys-155 each carry the N6-acetyllysine modification. Position 165 is a citrulline (Arg-165). A PHD-type zinc finger spans residues 195–244 (PTYCLCHQVSYGEMIGCDNPDCSIERFHFACVGLTTKPRGKWFCPRCSQE). 8 residues coordinate Zn(2+): Cys-198, Cys-200, Cys-211, Cys-216, His-222, Cys-225, Cys-238, and Cys-241.

The protein belongs to the ING family. As to quaternary structure, homodimer. Component of the HBO1 complex composed of KAT7/HBO1, MEAF6, ING4 or ING5, and one scaffold subunit: complexes containing BRPF scaffold (BRPF1, BRD1/BRPF2 or BRPF3) direct KAT7/HBO1 specificity towards H3K14ac, while complexes containing JADE scaffold (JADE1, JADE2 and JADE3) mediate acetylation of histone H4. Interacts with H3K4me3 and to a lesser extent with H3K4me2, the interaction augments KAT7/HBO1 acetylation activity on H3 tails. Interacts with EP300, RELA and TP53; these interactions may be indirect. Interacts with EGLN1. Interacts with BCL2A1. In terms of processing, citrullination by PADI4 within the nuclear localization signal disrupts the interaction with p53 and increases susceptibility to degradation.

The protein localises to the nucleus. Component of HBO1 complexes, which specifically mediate acetylation of histone H3 at 'Lys-14' (H3K14ac), and have reduced activity toward histone H4. Through chromatin acetylation it may function in DNA replication. May inhibit tumor progression by modulating the transcriptional output of signaling pathways which regulate cell proliferation. Can suppress brain tumor angiogenesis through transcriptional repression of RELA/NFKB3 target genes when complexed with RELA. May also specifically suppress loss of contact inhibition elicited by activated oncogenes such as MYC. Represses hypoxia inducible factor's (HIF) activity by interacting with HIF prolyl hydroxylase 2 (EGLN1). Can enhance apoptosis induced by serum starvation in mammary epithelial cell line HC11. This is Inhibitor of growth protein 4 (ING4) from Bos taurus (Bovine).